A 439-amino-acid chain; its full sequence is MSKYFEKVSKIKYEGPKSNNPYAFKFYNPEEVIDGKTMEEHLRFSIAYWHTFTADGTDQFGKATMQRPWNHLTDPMDIAKARVEAAFEFFDKINAPFFCFHDRDIAPEGDTLRETNKNLDIIVAMIKDYLKTSKTKVLWGTANLFSNPRFVHGASTSCNADVFAYSAAQVKKALEITKELGGQNYVFWGGREGYETLLNTDMELELDNFARFLHMAVDYAKEIGFEGQFLIEPKPKEPTKHQYDFDVANVLAFLRKYDLDKYFKVNIEANHATLAAHDFQHELRYARINGVLGSIDANTGDMLLGWDTDQFPTDIRMTTLAMYEVIKMGGFDKGGLNFDAKVRRASFEPEDLFLGHIAGMDAFAKGFKVAYKLVKDGVFDKFIEERYASYKDGIGADIVSGKADFKSLEKYALEHSEIVNKSGRQEMLESILNQYLFTE.

Active-site residues include His101 and Asp104. Glu232, Glu268, His271, Asp296, Asp307, Asp309, and Asp339 together coordinate Mg(2+).

Belongs to the xylose isomerase family. As to quaternary structure, homotetramer. Requires Mg(2+) as cofactor.

The protein resides in the cytoplasm. The catalysed reaction is alpha-D-xylose = alpha-D-xylulofuranose. This Thermoanaerobacterium thermosaccharolyticum (strain ATCC 7956 / DSM 571 / NCIMB 9385 / NCA 3814 / NCTC 13789 / WDCM 00135 / 2032) (Clostridium thermosaccharolyticum) protein is Xylose isomerase (xylA).